Here is a 464-residue protein sequence, read N- to C-terminus: ATP-dependent protease ATPase subunit HslU (464 aa).

Residues isoleucine 19, 61-66 (GVGKTE), aspartate 277, glutamate 342, and arginine 414 contribute to the ATP site.

Belongs to the ClpX chaperone family. HslU subfamily. In terms of assembly, a double ring-shaped homohexamer of HslV is capped on each side by a ring-shaped HslU homohexamer. The assembly of the HslU/HslV complex is dependent on binding of ATP.

The protein localises to the cytoplasm. Functionally, ATPase subunit of a proteasome-like degradation complex; this subunit has chaperone activity. The binding of ATP and its subsequent hydrolysis by HslU are essential for unfolding of protein substrates subsequently hydrolyzed by HslV. HslU recognizes the N-terminal part of its protein substrates and unfolds these before they are guided to HslV for hydrolysis. In Lactobacillus johnsonii (strain CNCM I-12250 / La1 / NCC 533), this protein is ATP-dependent protease ATPase subunit HslU.